A 122-amino-acid polypeptide reads, in one-letter code: Ribonuclease P protein component (122 aa).

It belongs to the RnpA family. In terms of assembly, consists of a catalytic RNA component (M1 or rnpB) and a protein subunit.

The catalysed reaction is Endonucleolytic cleavage of RNA, removing 5'-extranucleotides from tRNA precursor.. RNaseP catalyzes the removal of the 5'-leader sequence from pre-tRNA to produce the mature 5'-terminus. It can also cleave other RNA substrates such as 4.5S RNA. The protein component plays an auxiliary but essential role in vivo by binding to the 5'-leader sequence and broadening the substrate specificity of the ribozyme. This chain is Ribonuclease P protein component, found in Roseiflexus castenholzii (strain DSM 13941 / HLO8).